The chain runs to 220 residues: Deoxyribose-phosphate aldolase (220 aa).

Catalysis depends on Asp89, which acts as the Proton donor/acceptor. The Schiff-base intermediate with acetaldehyde role is filled by Lys151. Residue Lys180 is the Proton donor/acceptor of the active site.

The protein belongs to the DeoC/FbaB aldolase family. DeoC type 1 subfamily.

It localises to the cytoplasm. The catalysed reaction is 2-deoxy-D-ribose 5-phosphate = D-glyceraldehyde 3-phosphate + acetaldehyde. The protein operates within carbohydrate degradation; 2-deoxy-D-ribose 1-phosphate degradation; D-glyceraldehyde 3-phosphate and acetaldehyde from 2-deoxy-alpha-D-ribose 1-phosphate: step 2/2. In terms of biological role, catalyzes a reversible aldol reaction between acetaldehyde and D-glyceraldehyde 3-phosphate to generate 2-deoxy-D-ribose 5-phosphate. This Streptococcus mutans serotype c (strain ATCC 700610 / UA159) protein is Deoxyribose-phosphate aldolase.